Consider the following 291-residue polypeptide: Formamidopyrimidine-DNA glycosylase (291 aa).

P2 acts as the Schiff-base intermediate with DNA in catalysis. E3 functions as the Proton donor in the catalytic mechanism. K58 serves as the catalytic Proton donor; for beta-elimination activity. H100, R123, and K166 together coordinate DNA. An FPG-type zinc finger spans residues 257–291 (SVYGREGKECSRCGMHIVRIVQSGRSSFYCPQCQK). The active-site Proton donor; for delta-elimination activity is R281.

It belongs to the FPG family. Monomer. Requires Zn(2+) as cofactor.

It carries out the reaction Hydrolysis of DNA containing ring-opened 7-methylguanine residues, releasing 2,6-diamino-4-hydroxy-5-(N-methyl)formamidopyrimidine.. The enzyme catalyses 2'-deoxyribonucleotide-(2'-deoxyribose 5'-phosphate)-2'-deoxyribonucleotide-DNA = a 3'-end 2'-deoxyribonucleotide-(2,3-dehydro-2,3-deoxyribose 5'-phosphate)-DNA + a 5'-end 5'-phospho-2'-deoxyribonucleoside-DNA + H(+). Its function is as follows. Involved in base excision repair of DNA damaged by oxidation or by mutagenic agents. Acts as a DNA glycosylase that recognizes and removes damaged bases. Has a preference for oxidized purines, such as 7,8-dihydro-8-oxoguanine (8-oxoG). Has AP (apurinic/apyrimidinic) lyase activity and introduces nicks in the DNA strand. Cleaves the DNA backbone by beta-delta elimination to generate a single-strand break at the site of the removed base with both 3'- and 5'-phosphates. The protein is Formamidopyrimidine-DNA glycosylase of Bartonella bacilliformis (strain ATCC 35685 / KC583 / Herrer 020/F12,63).